Reading from the N-terminus, the 232-residue chain is MTATKMNAQEIIQFIANAEKKTSVKVTFEGQLATAVPSSVVKLGNVLFGDWKDVAPLLEGLVENQDYVVEQDARNSAVPLLDKRAINARIEPGAIIRDQVEIGDNAVIMMGSVINIGAEIGAGTMIDMGAILGGRAIVGKNSHVGAGAVLAGVIEPASAEPVRVGDNVLIGANAVVIEGVQIGSGSVVAAGAIVTQDVPENVVVAGVPARIIKEIDAQTQQKTALEDALRTL.

This sequence belongs to the transferase hexapeptide repeat family. DapH subfamily.

The enzyme catalyses (S)-2,3,4,5-tetrahydrodipicolinate + acetyl-CoA + H2O = L-2-acetamido-6-oxoheptanedioate + CoA. Its pathway is amino-acid biosynthesis; L-lysine biosynthesis via DAP pathway; LL-2,6-diaminopimelate from (S)-tetrahydrodipicolinate (acetylase route): step 1/3. Catalyzes the transfer of an acetyl group from acetyl-CoA to tetrahydrodipicolinate. The protein is 2,3,4,5-tetrahydropyridine-2,6-dicarboxylate N-acetyltransferase of Streptococcus pneumoniae serotype 4 (strain ATCC BAA-334 / TIGR4).